A 729-amino-acid chain; its full sequence is Receptor-like protein 2 (729 aa).

The signal sequence occupies residues 1–44; that stretch reads MRSKAKGLVRPLITKPVQPLSSHMHLFLLCILFLSALFLTLSEA. The interval 45–82 is N-cap; sequence VCNLQDRESLIWFSGNVSSSVSPLNWNLSIDCCSWEGI. At 45 to 707 the chain is on the extracellular side; the sequence is VCNLQDRESL…AKENDELNRT (663 aa). Residues Asn60 and Asn71 are each glycosylated (N-linked (GlcNAc...) asparagine). LRR repeat units lie at residues 89–113, 114–137, 139–163, 168–193, 195–219, 220–244, 245–268, 269–292, 293–316, 317–340, 342–364, 365–389, 391–413, 414–437, 439–464, 468–492, 493–515, 516–540, 542–560, and 561–584; these read DSHV…VQNI, HRLS…FFST, DQLM…AFGN, FFSI…VYLQ, TINL…MCRS, SPQL…LGRC, LRLT…IYNL, SELE…ITRL, RKLT…IGNL, SSLR…LANC, KLVK…EFSQ, LQSL…IFSC, SLTA…VLEL, ESLS…SILQ, CRKL…DFLS, FPKL…LINL, NKVE…WLGT, LPDL…LFQL, ALMS…PIFL, and NPNN…IYIR. Residues Asn145 and Asn163 are each glycosylated (N-linked (GlcNAc...) asparagine). N-linked (GlcNAc...) asparagine glycans are attached at residues Asn202 and Asn205. Residues Asn256, Asn267, Asn288, Asn315, Asn330, and Asn339 are each glycosylated (N-linked (GlcNAc...) asparagine). The N-linked (GlcNAc...) asparagine glycan is linked to Asn375. N-linked (GlcNAc...) asparagine glycosylation occurs at Asn428. Residues Asn564, Asn587, Asn611, Asn622, Asn635, Asn657, and Asn705 are each glycosylated (N-linked (GlcNAc...) asparagine). LRR repeat units lie at residues 599-623, 624-647, and 649-672; these read LKVL…LSNL, TNLE…LTNL, and FLSY…QFDT. A C-cap/acidic domain region spans residues 690 to 707; it reads LTSCKPTRAKENDELNRT. Residues 708-728 traverse the membrane as a helical segment; it reads FLMGIAIGYFLSFVSILVVRA. Position 729 (Trp729) is a topological domain, cytoplasmic.

The protein belongs to the RLP family.

The protein localises to the cell membrane. Involved in the perception of CLV3 and CLV3-like peptides, that act as extracellular signals regulating meristems maintenance. The chain is Receptor-like protein 2 from Arabidopsis thaliana (Mouse-ear cress).